Reading from the N-terminus, the 702-residue chain is Archaeal Lon protease (702 aa).

The disordered stretch occupies residues 1–63 (MSNESTNDAP…VGVEGDVSID (63 aa)). At 1–183 (MSNESTNDAP…EARKRNQMRS (183 aa)) the chain is on the cytoplasmic side. The segment covering 10-48 (PPDDDPDDPEPSVDHDDTDGLQDDPADSVDDAGEVDDLE) has biased composition (acidic residues). 117–124 (GSPGTGKS) is an ATP binding site. The helical transmembrane segment at 184 to 201 (FLMWIMILLAVGYALLIA) threads the bilayer. The Extracellular segment spans residues 202–206 (TPARP). The chain crosses the membrane as a helical span at residues 207 to 223 (LLALLSAAGIYLLFRYT). At 224–702 (NRGSDAMVPK…GTTGGNPSPQ (479 aa)) the chain is on the cytoplasmic side. Residues 487–667 (EEAVGRVNGL…SEVLDVALVG (181 aa)) enclose the Lon proteolytic domain. Active-site residues include serine 574 and lysine 617.

It belongs to the peptidase S16 family. Archaeal LonB subfamily. In terms of assembly, homohexamer. Organized in a ring with a central cavity.

It is found in the cell membrane. In terms of biological role, ATP-dependent serine protease that mediates the selective degradation of mutant and abnormal proteins as well as certain short-lived regulatory proteins. Degrades polypeptides processively. In Halobacterium salinarum (strain ATCC 700922 / JCM 11081 / NRC-1) (Halobacterium halobium), this protein is Archaeal Lon protease.